Reading from the N-terminus, the 876-residue chain is MSKSTAEIRQAFLDFFHSKGHQVVASSSLVPHNDPTLLFTNAGMNQFKDVFLGLDKRNYSRATTSQRCVRAGGKHNDLENVGYTARHHTFFEMLGNFSFGDYFKHDAIQFAWELLTSEKWFALPKERLWVTVYESDDEAYEIWEKEVGIPRERIIRIGDNKGAPYASDNFWQMGDTGPCGPCTEIFYDHGDHIWGGPPGSPEEDGDRYIEIWNIVFMQFNRQADGTMEPLPKPSVDTGMGLERIAAVLQHVNSNYDIDLFRTLIQAVAKVTGATDLSNKSLRVIADHIRSCAFLIADGVMPSNENRGYVLRRIIRRAVRHGNMLGAKETFFYKLVGPLIDVMGSAGEDLKRQQAQVEQVLKTEEEQFARTLERGLALLDEELAKLSGDTLDGETAFRLYDTYGFPVDLTADVCRERNIKVDEAGFEAAMEEQRRRAREASGFGADYNAMIRVDSASEFKGYDHLELNGKVTALFVDGKAVDAINAGQEAVVVLDQTPFYAESGGQVGDKGELKGANFSFAVEDTQKYGQAIGHIGKLATGSLKVGDAVQADVDEARRARIRLNHSATHLMHAALRQVLGTHVSQKGSLVNDKVLRFDFSHNEAMKPEEIRAVEDLVNAQIRRNLPIETNIMDLEAAKAKGAMALFGEKYDERVRVLSMGDFSTELCGGTHASRTGDIGLFRIISESGTAAGVRRIEAVTGEGAIATVHADSDRLSEVAHLLKGDSNNLADKVRSVLERTRQLEKELQQLKEQAAAQESANLSSKAIDVNGVKLLVSELSGVEPKMLRTMVDDLKNQLGSTIIVLATVAEGKVSLIAGVSKDVTDRVKAGELIGMVAQQVGGKGGGRPDMAQAGGTDAAALPAALASVKGWVSAKLQ.

Lysine 74 carries the N6-acetyllysine modification. Zn(2+) is bound by residues histidine 564, histidine 568, cysteine 666, and histidine 670.

The protein belongs to the class-II aminoacyl-tRNA synthetase family. In terms of assembly, homotetramer. It depends on Zn(2+) as a cofactor.

The protein localises to the cytoplasm. The enzyme catalyses tRNA(Ala) + L-alanine + ATP = L-alanyl-tRNA(Ala) + AMP + diphosphate. Its function is as follows. Catalyzes the attachment of alanine to tRNA(Ala) in a two-step reaction: alanine is first activated by ATP to form Ala-AMP and then transferred to the acceptor end of tRNA(Ala). Also edits incorrectly charged Ser-tRNA(Ala) and Gly-tRNA(Ala) via its editing domain. In Escherichia coli (strain SMS-3-5 / SECEC), this protein is Alanine--tRNA ligase.